Consider the following 481-residue polypeptide: Aspartyl/glutamyl-tRNA(Asn/Gln) amidotransferase subunit B (481 aa).

The protein belongs to the GatB/GatE family. GatB subfamily. As to quaternary structure, heterotrimer of A, B and C subunits.

The catalysed reaction is L-glutamyl-tRNA(Gln) + L-glutamine + ATP + H2O = L-glutaminyl-tRNA(Gln) + L-glutamate + ADP + phosphate + H(+). The enzyme catalyses L-aspartyl-tRNA(Asn) + L-glutamine + ATP + H2O = L-asparaginyl-tRNA(Asn) + L-glutamate + ADP + phosphate + 2 H(+). In terms of biological role, allows the formation of correctly charged Asn-tRNA(Asn) or Gln-tRNA(Gln) through the transamidation of misacylated Asp-tRNA(Asn) or Glu-tRNA(Gln) in organisms which lack either or both of asparaginyl-tRNA or glutaminyl-tRNA synthetases. The reaction takes place in the presence of glutamine and ATP through an activated phospho-Asp-tRNA(Asn) or phospho-Glu-tRNA(Gln). The chain is Aspartyl/glutamyl-tRNA(Asn/Gln) amidotransferase subunit B from Pseudomonas fluorescens (strain ATCC BAA-477 / NRRL B-23932 / Pf-5).